Here is a 486-residue protein sequence, read N- to C-terminus: Glutamyl-tRNA(Gln) amidotransferase subunit A (486 aa).

Catalysis depends on charge relay system residues K77 and S152. Catalysis depends on S176, which acts as the Acyl-ester intermediate.

This sequence belongs to the amidase family. GatA subfamily. Heterotrimer of A, B and C subunits.

The catalysed reaction is L-glutamyl-tRNA(Gln) + L-glutamine + ATP + H2O = L-glutaminyl-tRNA(Gln) + L-glutamate + ADP + phosphate + H(+). Allows the formation of correctly charged Gln-tRNA(Gln) through the transamidation of misacylated Glu-tRNA(Gln) in organisms which lack glutaminyl-tRNA synthetase. The reaction takes place in the presence of glutamine and ATP through an activated gamma-phospho-Glu-tRNA(Gln). This chain is Glutamyl-tRNA(Gln) amidotransferase subunit A, found in Pediococcus pentosaceus (strain ATCC 25745 / CCUG 21536 / LMG 10740 / 183-1w).